Here is a 992-residue protein sequence, read N- to C-terminus: MATIMIGSMAISVPNTHVSCASNSVMPVQAVQMAKQVPSARGVLYTLKREGSTQVHKHEEALRKFQEAFDQDVGIQRRLLVNKHSSIQSTKKNGLTLRRLTLEQARAKEAAIARRKQEEEDFLNGKYEQQFYAGVSATKSMKFEGGSVGFRTKYWRPTPKKTKERRATSQCRKPTYVLEEVLSIASKSGKLVEFITGKGKRVKVCYVRKHGAILPKFSLPHEEGKYIHQELQYASTYEFLPYICMFAKYKSINADDITYGDSGLLFDERSSLTTNHTKLPYFVVRGRRNGKLVNALEVVENMEDIQHYSQNPEAQFFRGWKKVFDKMPPHVENHECTTDFTNEQCGELAAAISQSIFPVKKLSCKQCRQHIKHLSWEEYKQFLLAHMGCHGPEWETFQEIDGMRYVKRVIETSTAENASLQTSLEIVRLTQNYKSTHMLQIQDINKALMKGPSVTQSELEQASKQLLAMTQWWKNHMTLTDEDALKVFRNKRSSKALLNPSLLCDNQLDKNGNFVWGERGRHSKRFFANYFEEVVPSEGYSKYVIRKNPNGQRELAIGSLIVPLDFERARMALQGKSVTREPITMSCISRQDGNFVYPCCCVTHDDGKAFYSELRSPTKRHLVIGTSGDPKYIDLPATDADRMYIAKEGFCYLNIFLAMLVNVNEDEAKDFTKMVRDVIVPRLGKWPTMLDVATAAYMLTVFHPETRNAELPRILVDHACQTMHVIDSFGSLTVGYHVLKAGTVNQLIQFASNDLQSEMKFYRVGGEVQQRMKCETALITSIFKPKRMIQILENDPYILLMGLVSPSILIHMYRMKHFEKGVELWISKEHSVAKIFIILEQLTKRVAANDVLLEQLEMISETSERFMSILEDCPQAPHSYKTAKDLLTMYIERKASNNQLVENGFVDMNDKLYMAYEKNLLRSLEAGMARIKLVGKIFYNMAIEKICSTYGEMFDKESCRRKQRIFRKLCECVLHECPVTPKKCKKYTFPKM.

The 141-residue stretch at 168 to 308 (TSQCRKPTYV…VENMEDIQHY (141 aa)) folds into the Peptidase S30 domain. Catalysis depends on for P1 proteinase activity residues H221, E230, and S262. An Involved in interaction with stylet and aphid transmission motif is present at residues 361-364 (KLSC). An Involved in virions binding and aphid transmission motif is present at residues 617-619 (PTK). The region spanning 643–765 (MYIAKEGFCY…QSEMKFYRVG (123 aa)) is the Peptidase C6 domain. Active-site for helper component proteinase activity residues include C651 and H724.

The protein belongs to the potyviridae P3N-PIPO polyprotein family. Interacts (via PIPO domain) with host PCaP1 protein; this interaction may help to anchor the movement complex to the plasma membrane from which the complex could move to the plasmodesmata. Post-translationally, potyviral RNA is expressed as two polyproteins which undergo post-translational proteolytic processing. Genome polyprotein is processed by NIa-pro, P1 and HC-pro proteinases resulting in the production of at least ten individual proteins. P3N-PIPO is cleaved by P1 and HC-pro proteinases resulting in the production of three individual proteins. The P1 proteinase and the HC-pro cleave only their respective C-termini autocatalytically.

It is found in the host cell junction. The protein resides in the host plasmodesma. It catalyses the reaction Hydrolyzes a Gly-|-Gly bond at its own C-terminus, commonly in the sequence -Tyr-Xaa-Val-Gly-|-Gly, in the processing of the potyviral polyprotein.. Functionally, required for aphid transmission and also has proteolytic activity. Only cleaves a Gly-Gly dipeptide at its own C-terminus. Interacts with virions and aphid stylets. Acts as a suppressor of RNA-mediated gene silencing, also known as post-transcriptional gene silencing (PTGS), a mechanism of plant viral defense that limits the accumulation of viral RNAs. May have RNA-binding activity. Allows efficient cell to cell propagation, by bypassing the host cell wall barrier. Transports viral genome to neighboring plant cells directly through plasmosdesmata, without any budding. In Glycine max (Soybean), this protein is P3N-PIPO polyprotein.